Here is a 294-residue protein sequence, read N- to C-terminus: Homeobox-leucine zipper protein ATHB-16 (294 aa).

Residues 1 to 20 show a composition bias toward polar residues; it reads MKRLSSSDSMCGLISTSTDE. The segment at 1-31 is disordered; the sequence is MKRLSSSDSMCGLISTSTDEQSPRGYGSNYQ. The homeobox DNA-binding region spans 56–115; that stretch reads LSEKKRRLKVDQVKALEKNFELENKLEPERKTKLAQELGLQPRQVAVWFQNRRARWKTKQ. A leucine-zipper region spans residues 116-151; it reads LEKDYGVLKGQYDSLRHNFDSLRRDNDSLLQEISKI. Residues 219 to 238 are compositionally biased toward polar residues; it reads SSDSCDSSAVLNDETSSDNG. Positions 219–241 are disordered; that stretch reads SSDSCDSSAVLNDETSSDNGRLT.

This sequence belongs to the HD-ZIP homeobox family. Class I subfamily. As to expression, widely expressed with a lower level in siliques.

The protein resides in the nucleus. Functionally, probable transcription factor that may function as a negative regulator of the flowering time response to photoperiod. May act to repress cell expansion during plant development. This is Homeobox-leucine zipper protein ATHB-16 (ATHB-16) from Arabidopsis thaliana (Mouse-ear cress).